A 572-amino-acid chain; its full sequence is 2-succinyl-5-enolpyruvyl-6-hydroxy-3-cyclohexene-1-carboxylate synthase (572 aa).

It belongs to the TPP enzyme family. MenD subfamily. In terms of assembly, homodimer. It depends on Mg(2+) as a cofactor. Requires Mn(2+) as cofactor. The cofactor is thiamine diphosphate.

It catalyses the reaction isochorismate + 2-oxoglutarate + H(+) = 5-enolpyruvoyl-6-hydroxy-2-succinyl-cyclohex-3-ene-1-carboxylate + CO2. Its pathway is quinol/quinone metabolism; 1,4-dihydroxy-2-naphthoate biosynthesis; 1,4-dihydroxy-2-naphthoate from chorismate: step 2/7. It functions in the pathway quinol/quinone metabolism; menaquinone biosynthesis. In terms of biological role, catalyzes the thiamine diphosphate-dependent decarboxylation of 2-oxoglutarate and the subsequent addition of the resulting succinic semialdehyde-thiamine pyrophosphate anion to isochorismate to yield 2-succinyl-5-enolpyruvyl-6-hydroxy-3-cyclohexene-1-carboxylate (SEPHCHC). The polypeptide is 2-succinyl-5-enolpyruvyl-6-hydroxy-3-cyclohexene-1-carboxylate synthase (Vibrio campbellii (strain ATCC BAA-1116)).